The chain runs to 466 residues: uncharacterized protein (466 aa).

The region spanning 4-199 (NHNSKAKRPK…IINVSLQLKL (196 aa)) is the C2 NT-type domain. Disordered stretches follow at residues 262-298 (AKPG…STTI), 374-393 (LGNK…YSTM), and 400-452 (EKKQ…LTDR). Polar residues predominate over residues 266-298 (TNATGNSTSIKSPTSTNHKSSEMTTKPGLSTTI). Ser433 and Ser439 each carry phosphoserine.

It to S.pombe SpCC1494.08c.

This is an uncharacterized protein from Saccharomyces cerevisiae (strain ATCC 204508 / S288c) (Baker's yeast).